The sequence spans 187 residues: 5-formyltetrahydrofolate cyclo-ligase (187 aa).

ATP is bound by residues 6-10, 139-146, and Asp178; these read RQQIR and GMGGGFYD.

Belongs to the 5-formyltetrahydrofolate cyclo-ligase family.

The catalysed reaction is (6S)-5-formyl-5,6,7,8-tetrahydrofolate + ATP = (6R)-5,10-methenyltetrahydrofolate + ADP + phosphate. The protein operates within one-carbon metabolism; tetrahydrofolate interconversion. Its function is as follows. Involved in the removal of 5-formyltetrahydrofolate. In vitro, it is a potent inhibitor of various folate-dependent enzymes in the C1 metabolism network and in vivo it might function as a folate storage. 5-formyltetrahydrofolate is also used as an antifolate rescue agent in cancer chemotherapy. Catalyzes the irreversible ATP-dependent transformation of 5-formyltetrahydrofolate (5-CHO-THF) to form 5,10-methenyltetrahydrofolate (5,10-CH=THF). The reverse reaction is catalyzed by the serine hydroxymethyltransferase GlyA (SHMT). The polypeptide is 5-formyltetrahydrofolate cyclo-ligase (Haemophilus influenzae (strain ATCC 51907 / DSM 11121 / KW20 / Rd)).